The following is a 222-amino-acid chain: PKHD-type hydroxylase Syncc9605_1577 (222 aa).

One can recognise a Fe2OG dioxygenase domain in the interval 80-175 (KVHSLLVSRS…RYVCVGWIES (96 aa)). Fe cation is bound by residues His98, Asp100, and His156. Arg166 is a 2-oxoglutarate binding site.

The cofactor is Fe(2+). L-ascorbate serves as cofactor.

The polypeptide is PKHD-type hydroxylase Syncc9605_1577 (Synechococcus sp. (strain CC9605)).